We begin with the raw amino-acid sequence, 256 residues long: uncharacterized protein (256 aa).

The first 24 residues, 1 to 24, serve as a signal peptide directing secretion; sequence MIKRVNKLVLGISLLFLVISITAG. A lipid anchor (N-palmitoyl cysteine) is attached at Cys-25. Cys-25 carries the S-diacylglycerol cysteine lipid modification.

The protein belongs to the staphylococcal tandem lipoprotein family.

It is found in the cell membrane. This is an uncharacterized protein from Staphylococcus aureus (strain MW2).